The following is a 416-amino-acid chain: Formyl-CoA:oxalate CoA-transferase (416 aa).

CoA contacts are provided by residues 17–18 (QS), Arg-38, 72–75 (LNTK), 96–98 (NFH), His-104, and 137–140 (KAYE). Asp-169 (nucleophile) is an active-site residue. Substrate is bound at residue 248 to 250 (GGQ). 273–275 (QEQ) contacts CoA.

It belongs to the CoA-transferase III family. Frc subfamily. As to quaternary structure, homodimer.

The enzyme catalyses formyl-CoA + oxalate = oxalyl-CoA + formate. It functions in the pathway metabolic intermediate degradation; oxalate degradation; CO(2) and formate from oxalate: step 1/2. Its function is as follows. Involved in the catabolism of oxalate and in the adapatation to low pH via the induction of the oxalate-dependent acid tolerance response (ATR). Catalyzes the transfer of the CoA moiety from formyl-CoA to oxalate. The sequence is that of Formyl-CoA:oxalate CoA-transferase from Escherichia coli O6:H1 (strain CFT073 / ATCC 700928 / UPEC).